A 498-amino-acid polypeptide reads, in one-letter code: ATP synthase subunit beta, chloroplastic (498 aa).

Thr6 carries the phosphothreonine modification. Phosphoserine is present on Ser13. Residue 172-179 (GGAGVGKT) coordinates ATP.

The protein belongs to the ATPase alpha/beta chains family. F-type ATPases have 2 components, CF(1) - the catalytic core - and CF(0) - the membrane proton channel. CF(1) has five subunits: alpha(3), beta(3), gamma(1), delta(1), epsilon(1). CF(0) has four main subunits: a(1), b(1), b'(1) and c(9-12).

It is found in the plastid. The protein localises to the chloroplast thylakoid membrane. It carries out the reaction ATP + H2O + 4 H(+)(in) = ADP + phosphate + 5 H(+)(out). In terms of biological role, produces ATP from ADP in the presence of a proton gradient across the membrane. The catalytic sites are hosted primarily by the beta subunits. The sequence is that of ATP synthase subunit beta, chloroplastic from Draba nemorosa (Woodland whitlowgrass).